The sequence spans 248 residues: uncharacterized protein (248 aa).

The chain crosses the membrane as a helical span at residues 7-25; sequence TIFIGGIYGLGVYIGAVAW.

The protein belongs to the methyltransferase superfamily. METL family.

It is found in the mitochondrion inner membrane. Probable methyltransferase. This is an uncharacterized protein from Schizosaccharomyces pombe (strain 972 / ATCC 24843) (Fission yeast).